We begin with the raw amino-acid sequence, 339 residues long: Holliday junction branch migration complex subunit RuvB (339 aa).

The tract at residues Met1–Tyr181 is large ATPase domain (RuvB-L). ATP contacts are provided by residues Leu20, Arg21, Gly62, Lys65, Thr66, Thr67, Glu128–Phe130, Arg171, Tyr181, and Arg218. Thr66 provides a ligand contact to Mg(2+). The interval Ser182–Glu252 is small ATPAse domain (RuvB-S). Positions Glu255–Trp339 are head domain (RuvB-H). The DNA site is built by Arg310 and Arg315.

This sequence belongs to the RuvB family. As to quaternary structure, homohexamer. Forms an RuvA(8)-RuvB(12)-Holliday junction (HJ) complex. HJ DNA is sandwiched between 2 RuvA tetramers; dsDNA enters through RuvA and exits via RuvB. An RuvB hexamer assembles on each DNA strand where it exits the tetramer. Each RuvB hexamer is contacted by two RuvA subunits (via domain III) on 2 adjacent RuvB subunits; this complex drives branch migration. In the full resolvosome a probable DNA-RuvA(4)-RuvB(12)-RuvC(2) complex forms which resolves the HJ.

The protein localises to the cytoplasm. It carries out the reaction ATP + H2O = ADP + phosphate + H(+). Functionally, the RuvA-RuvB-RuvC complex processes Holliday junction (HJ) DNA during genetic recombination and DNA repair, while the RuvA-RuvB complex plays an important role in the rescue of blocked DNA replication forks via replication fork reversal (RFR). RuvA specifically binds to HJ cruciform DNA, conferring on it an open structure. The RuvB hexamer acts as an ATP-dependent pump, pulling dsDNA into and through the RuvAB complex. RuvB forms 2 homohexamers on either side of HJ DNA bound by 1 or 2 RuvA tetramers; 4 subunits per hexamer contact DNA at a time. Coordinated motions by a converter formed by DNA-disengaged RuvB subunits stimulates ATP hydrolysis and nucleotide exchange. Immobilization of the converter enables RuvB to convert the ATP-contained energy into a lever motion, pulling 2 nucleotides of DNA out of the RuvA tetramer per ATP hydrolyzed, thus driving DNA branch migration. The RuvB motors rotate together with the DNA substrate, which together with the progressing nucleotide cycle form the mechanistic basis for DNA recombination by continuous HJ branch migration. Branch migration allows RuvC to scan DNA until it finds its consensus sequence, where it cleaves and resolves cruciform DNA. The sequence is that of Holliday junction branch migration complex subunit RuvB from Carboxydothermus hydrogenoformans (strain ATCC BAA-161 / DSM 6008 / Z-2901).